Reading from the N-terminus, the 152-residue chain is Large ribosomal subunit protein bL9 (152 aa).

A disordered region spans residues 41 to 61; it reads QSAMSQLNAERKAEQRREAEE. The span at 49–61 shows a compositional bias: basic and acidic residues; that stretch reads AERKAEQRREAEE.

The protein belongs to the bacterial ribosomal protein bL9 family.

Functionally, binds to the 23S rRNA. The polypeptide is Large ribosomal subunit protein bL9 (Levilactobacillus brevis (strain ATCC 367 / BCRC 12310 / CIP 105137 / JCM 1170 / LMG 11437 / NCIMB 947 / NCTC 947) (Lactobacillus brevis)).